We begin with the raw amino-acid sequence, 499 residues long: Putative lipase atg15 (499 aa).

Over 1-9 (MSIGEVSDS) the chain is Cytoplasmic. A helical; Signal-anchor for type II membrane protein transmembrane segment spans residues 10–30 (AGHLASLVLPIEVAPIAPLIP). Topologically, residues 31-499 (EPPATAEHIF…PDSPERNEEM (469 aa)) are lumenal. Residues asparagine 170, asparagine 191, asparagine 192, asparagine 250, and asparagine 274 are each glycosylated (N-linked (GlcNAc...) asparagine). Serine 290 serves as the catalytic Charge relay system. N-linked (GlcNAc...) asparagine glycosylation is present at asparagine 436. The tract at residues 436–499 (NGTETTTTSS…PDSPERNEEM (64 aa)) is disordered. Low complexity predominate over residues 438–454 (TETTTTSSAPTTTSISR).

The protein belongs to the AB hydrolase superfamily. Lipase family. Binds to both phosphatidylinositol (PI) and phosphatidylinositol 3,5-bisphosphate (PIP2).

It is found in the endosome. Its subcellular location is the multivesicular body membrane. The protein localises to the prevacuolar compartment membrane. The enzyme catalyses a triacylglycerol + H2O = a diacylglycerol + a fatty acid + H(+). Lipase which is essential for lysis of subvacuolar cytoplasm to vacuole targeted bodies and intravacuolar autophagic bodies. Involved in the lysis of intravacuolar multivesicular body (MVB) vesicles. The intravacuolar membrane disintegration by atg15 is critical to life span extension. This Chaetomium globosum (strain ATCC 6205 / CBS 148.51 / DSM 1962 / NBRC 6347 / NRRL 1970) (Soil fungus) protein is Putative lipase atg15 (atg15).